A 228-amino-acid chain; its full sequence is Probable methylthioribulose-1-phosphate dehydratase (228 aa).

Cysteine 87 serves as a coordination point for substrate. 2 residues coordinate Zn(2+): histidine 105 and histidine 107. The active-site Proton donor/acceptor is the glutamate 129. Histidine 185 provides a ligand contact to Zn(2+).

The protein belongs to the aldolase class II family. MtnB subfamily. Zn(2+) is required as a cofactor.

It localises to the cytoplasm. It carries out the reaction 5-(methylsulfanyl)-D-ribulose 1-phosphate = 5-methylsulfanyl-2,3-dioxopentyl phosphate + H2O. The protein operates within amino-acid biosynthesis; L-methionine biosynthesis via salvage pathway; L-methionine from S-methyl-5-thio-alpha-D-ribose 1-phosphate: step 2/6. In terms of biological role, catalyzes the dehydration of methylthioribulose-1-phosphate (MTRu-1-P) into 2,3-diketo-5-methylthiopentyl-1-phosphate (DK-MTP-1-P). This is Probable methylthioribulose-1-phosphate dehydratase from Drosophila willistoni (Fruit fly).